A 100-amino-acid chain; its full sequence is Small ribosomal subunit protein uS14c (100 aa).

Belongs to the universal ribosomal protein uS14 family. In terms of assembly, part of the 30S ribosomal subunit.

The protein localises to the plastid. Its subcellular location is the chloroplast. Its function is as follows. Binds 16S rRNA, required for the assembly of 30S particles. This Porphyra purpurea (Red seaweed) protein is Small ribosomal subunit protein uS14c.